The primary structure comprises 340 residues: Ketol-acid reductoisomerase (NADP(+)) (340 aa).

The KARI N-terminal Rossmann domain maps to 1 to 182; it reads MRVYYDRDCD…GGGRSGIIET (182 aa). NADP(+) is bound by residues 24–27, Arg48, Ser51, Ser53, and 83–86; these read YGSQ and DELQ. Residue His108 is part of the active site. NADP(+) is bound at residue Gly134. The region spanning 183-329 is the KARI C-terminal knotted domain; it reads NFREECETDL…ETLRGMMPWI (147 aa). Positions 191, 195, 227, and 231 each coordinate Mg(2+). Position 252 (Ser252) interacts with substrate.

Belongs to the ketol-acid reductoisomerase family. Mg(2+) is required as a cofactor.

It carries out the reaction (2R)-2,3-dihydroxy-3-methylbutanoate + NADP(+) = (2S)-2-acetolactate + NADPH + H(+). The enzyme catalyses (2R,3R)-2,3-dihydroxy-3-methylpentanoate + NADP(+) = (S)-2-ethyl-2-hydroxy-3-oxobutanoate + NADPH + H(+). The protein operates within amino-acid biosynthesis; L-isoleucine biosynthesis; L-isoleucine from 2-oxobutanoate: step 2/4. It functions in the pathway amino-acid biosynthesis; L-valine biosynthesis; L-valine from pyruvate: step 2/4. Its function is as follows. Involved in the biosynthesis of branched-chain amino acids (BCAA). Catalyzes an alkyl-migration followed by a ketol-acid reduction of (S)-2-acetolactate (S2AL) to yield (R)-2,3-dihydroxy-isovalerate. In the isomerase reaction, S2AL is rearranged via a Mg-dependent methyl migration to produce 3-hydroxy-3-methyl-2-ketobutyrate (HMKB). In the reductase reaction, this 2-ketoacid undergoes a metal-dependent reduction by NADPH to yield (R)-2,3-dihydroxy-isovalerate. This is Ketol-acid reductoisomerase (NADP(+)) from Jannaschia sp. (strain CCS1).